The primary structure comprises 430 residues: Multisubstrate adapter protein soc-1 (430 aa).

The region spanning 7-133 (NIILEGSLKR…WVNEICKLCK (127 aa)) is the PH domain. The segment covering 192 to 222 (SHNSLPSNPNYNNLPDPLESSRSETSSMYSS) has biased composition (low complexity). Disordered regions lie at residues 192–246 (SHNS…TRHT), 275–303 (EDAE…SEGF), and 315–377 (RRAP…RNLD). The segment covering 341–369 (RNLSRNGVNENGNYSATFSSRTSNYQQSE) has biased composition (polar residues).

As to quaternary structure, interacts (via C-terminus) with sem-5 (probably via SH3 domain 2). Interacts with nicotinic acetylcholine receptor. May be phosphorylated.

Functionally, adapter protein which modulates signaling mediated by several receptor tyrosine kinases. Plays a role in fluid homeostasis, probably downstream of receptor egl-15 and upstream of let-60/Ras. Involved in nicotinic acetylcholine receptor (nAChR)-mediated sensitivity to nicotine and levamisole and gamma-aminobutyric acid (GABA)receptor-mediated sensitivity to muscimol. Regulates synaptic levels of nAchR receptor subunit lev-1 and unc-38, and GABA receptor subunit unc-49 in the nerve cord, probably downstream of egl-15. Regulates motility. During the formation of neuromuscular junctions at the larval stage, down-regulates membrane protrusion from body wall muscles, probably downstream of egl-15. Promotes vulva induction and down-regulates fertility, probably downstream of receptor let-23. Down-regulates daf-2-mediated repression of dauer formation and positively regulates daf-2-mediated aging. May be involved in the recruitment of phosphatase ptp-2 to egl-15. The polypeptide is Multisubstrate adapter protein soc-1 (Caenorhabditis elegans).